A 170-amino-acid chain; its full sequence is Flavodoxin (170 aa).

A Flavodoxin-like domain is found at 5 to 165 (IGLFYGTQTG…RIKSWVAQLK (161 aa)).

This sequence belongs to the flavodoxin family. The cofactor is FMN.

Its function is as follows. Low-potential electron donor to a number of redox enzymes. This Nostoc sp. (strain PCC 7120 / SAG 25.82 / UTEX 2576) protein is Flavodoxin (isiB).